Here is a 260-residue protein sequence, read N- to C-terminus: MVLITVLANLLILQLSYAQKSSELVIGGDECNINEHRFLVALYDVWSGDFLCGGTLINKEYVLTAAHCETRNMYIYLGMHNKNVQFDDEQRRYPKKKYFFRCSNNFTRWDKDIMLIRLNRPVRNSEHIAPLSLPSSPPSVGSVCRVMGWGTITSPNETLPDVPRCANINLLNYTVCRGVFPRLPARSRTLCAGVLQGGIDTCKRDSGGPLICNGQLQGVVFWGPKPCAQPRKPALYTKVFNHLDWIQSIIAGNTTVTCPP.

A signal peptide spans 1-18 (MVLITVLANLLILQLSYA). Positions 19–24 (QKSSEL) are excised as a propeptide. The 227-residue stretch at 25 to 251 (VIGGDECNIN…HLDWIQSIIA (227 aa)) folds into the Peptidase S1 domain. 6 cysteine pairs are disulfide-bonded: C31–C165, C52–C68, C102–C258, C144–C212, C176–C191, and C202–C227. Catalysis depends on H67, which acts as the Charge relay system. N105 carries an N-linked (GlcNAc...) asparagine glycan. The active-site Charge relay system is D112. N-linked (GlcNAc...) asparagine glycans are attached at residues N156 and N172. The active-site Charge relay system is the S206. The N-linked (GlcNAc...) asparagine glycan is linked to N253.

This sequence belongs to the peptidase S1 family. Snake venom subfamily. As to quaternary structure, monomer. Expressed by the venom gland.

The protein localises to the secreted. In terms of biological role, thrombin-like snake venom serine protease. This Trimeresurus albolabris (White-lipped pit viper) protein is Thrombin-like enzyme 1.